We begin with the raw amino-acid sequence, 296 residues long: Peptide transport system permease protein SapC (296 aa).

The Cytoplasmic segment spans residues 1-28; that stretch reads MPYDSVYSEKRPPGTLRTAWRKFYSDAS. The chain crosses the membrane as a helical span at residues 29–49; that stretch reads AMVGLYGCAGLAVLCIFGGWF. The Periplasmic segment spans residues 50–98; that stretch reads APYGIDQQFLGYQLLPPSWSRYGEVSFFLGTDDLGRDVLSRLLSGAAPT. Residues 99–119 form a helical membrane-spanning segment; sequence VGGAFVVTLAATICGLVLGTF. An ABC transmembrane type-1 domain is found at 99–284; sequence VGGAFVVTLA…ISVLLVNLLG (186 aa). The Cytoplasmic segment spans residues 120-133; the sequence is AGATHGLRSAVLNH. Residues 134-154 form a helical membrane-spanning segment; that stretch reads ILDTLLAIPSLLLAIIVVAFA. Over 155–196 the chain is Periplasmic; that stretch reads GPSLSHAMFAVWLALLPRMVRSIYSMVHDELEKEYVIAARLD. The chain crosses the membrane as a helical span at residues 197–217; it reads GASTLNILWFAVMPNITAGLV. Residues 218 to 222 are Cytoplasmic-facing; that stretch reads TEITR. The chain crosses the membrane as a helical span at residues 223–243; the sequence is ALSMAILDIAALGFLDLGAQL. The Periplasmic segment spans residues 244–257; that stretch reads PSPEWGAMLGDALE. The chain crosses the membrane as a helical span at residues 258–278; sequence LIYVAPWTVMLPGAAIMISVL. The Cytoplasmic segment spans residues 279 to 296; it reads LVNLLGDGVRRAIIAGVE.

Belongs to the binding-protein-dependent transport system permease family. OppBC subfamily.

Its subcellular location is the cell inner membrane. Involved in a peptide intake transport system that plays a role in the resistance to antimicrobial peptides. The polypeptide is Peptide transport system permease protein SapC (sapC) (Escherichia coli O6:H1 (strain CFT073 / ATCC 700928 / UPEC)).